A 499-amino-acid chain; its full sequence is Serine/threonine-protein phosphatase 5 (499 aa).

A disordered region spans residues 1–24 (MAMAEGERTECAETPRDEPPADGT). Residue Ala2 is modified to N-acetylalanine. TPR repeat units lie at residues 28-61 (AEELKTQANDYFKAKDYENAIKFYSQAIELNPGN), 62-95 (AIYYGNRSLAYLRTECYGYALGDATRAIELDKKY), and 96-129 (IKGYYRRAASNMALGKFRAALRDYETVVKVKPND). The segment at 184–499 (GKVTITFMKD…ANTLLQLGMM (316 aa)) is catalytic. Mn(2+) contacts are provided by Asp242, His244, and Asp271. A substrate-binding site is contributed by His244. Residues Arg275 and 303 to 304 (NH) each bind substrate. Residue Asn303 coordinates Mn(2+). The active-site Proton donor/acceptor is the His304. His352 lines the Mn(2+) pocket. The substrate site is built by Arg400 and His427. Position 427 (His427) interacts with Mn(2+). The interval 495–499 (QLGMM) is required for autoinhibition.

This sequence belongs to the PPP phosphatase family. PP-5 (PP-T) subfamily. In terms of assembly, probably forms a complex composed of chaperones HSP90 and HSP70, co-chaperones STIP1/HOP, CDC37, PPP5C, PTGES3/p23, TSC1 and client protein TSC2. Probably forms a complex composed of chaperones HSP90 and HSP70, co-chaperones CDC37, PPP5C, TSC1 and client protein TSC2, CDK4, AKT, RAF1 and NR3C1; this complex does not contain co-chaperones STIP1/HOP and PTGES3/p23. Part of a complex with HSP90/HSP90AA1 and steroid receptors. Interacts (via TPR repeats) with HSP90AA1 (via TPR repeat-binding motif) or HSPA1A/HSPA1B; the interaction is direct and activates the phosphatase activity. Dissociates from HSPA1A/HSPA1B and HSP90AA1 in response to arachidonic acid. Interacts with CPNE1 (via VWFA domain). Interacts with CDC16, CDC27. Interacts with KLHDC10 (via the 6 Kelch repeats); inhibits the phosphatase activity on MAP3K5. Interacts with ATM and ATR; both interactions are induced by DNA damage and enhance ATM and ATR kinase activity. Interacts with RAD17; reduced by DNA damage. Interacts with nuclear receptors such as NR3C1/GCR and PPARG (activated by agonist); regulates their transactivation activities. Interacts (via TPR repeats) with S100 proteins S100A1, S100A2, S100A6, S100B and S100P; the interactions are calcium-dependent, strongly activate PPP5C phosphatase activity and compete with HSP90AA1 and MAP3K5 interactions. Interacts with SMAD2 and SMAD3 but not with SMAD1; decreases SMAD3 phosphorylation and protein levels. Interacts (via TPR repeats) with CRY1 and CRY2; the interaction with CRY2 down-regulates the phosphatase activity on CSNK1E. Interacts (via TPR repeats) with the active form of RAC1, GNA12 or GNA13; these interactions activate the phosphatase activity and translocate PPP5C to the cell membrane. Interacts with FLCN. The cofactor is Mg(2+). Mn(2+) is required as a cofactor. Activated by at least two different proteolytic cleavages producing a 56 kDa and a 50 kDa form. In terms of tissue distribution, expressed in liver (at protein level) and brain, enriched in suprachiasmatic nuclei.

Its subcellular location is the nucleus. The protein localises to the cytoplasm. The protein resides in the cell membrane. The enzyme catalyses O-phospho-L-seryl-[protein] + H2O = L-seryl-[protein] + phosphate. It catalyses the reaction O-phospho-L-threonyl-[protein] + H2O = L-threonyl-[protein] + phosphate. Autoinhibited. In the autoinhibited state, the TPR domain interacts with the catalytic region and prevents substrate access to the catalytic pocket. Allosterically activated by various polyunsaturated fatty acids, free long-chain fatty-acids and long-chain fatty acyl-CoA esters, arachidonic acid being the most effective activator. HSP90A and probably RAC1, GNA12 and GNA13 can also release the autoinhibition by the TPR repeat. Activation by RAC1, GNA12 and GNA13 is synergistic with the one produced by fatty acids binding. Inhibited by okadaic acid. Its function is as follows. Serine/threonine-protein phosphatase that dephosphorylates a myriad of proteins involved in different signaling pathways including the kinases CSNK1E, ASK1/MAP3K5, PRKDC and RAF1, the nuclear receptors NR3C1, PPARG, ESR1 and ESR2, SMAD proteins and TAU/MAPT. Implicated in wide ranging cellular processes, including apoptosis, differentiation, DNA damage response, cell survival, regulation of ion channels or circadian rhythms, in response to steroid and thyroid hormones, calcium, fatty acids, TGF-beta as well as oxidative and genotoxic stresses. Participates in the control of DNA damage response mechanisms such as checkpoint activation and DNA damage repair through, for instance, the regulation ATM/ATR-signaling and dephosphorylation of PRKDC and TP53BP1. Inhibits ASK1/MAP3K5-mediated apoptosis induced by oxidative stress. Plays a positive role in adipogenesis, mainly through the dephosphorylation and activation of PPARG transactivation function. Also dephosphorylates and inhibits the anti-adipogenic effect of NR3C1. Regulates the circadian rhythms, through the dephosphorylation and activation of CSNK1E. May modulate TGF-beta signaling pathway by the regulation of SMAD3 phosphorylation and protein expression levels. Dephosphorylates and may play a role in the regulation of TAU/MAPT. Through their dephosphorylation, may play a role in the regulation of ions channels such as KCNH2. Dephosphorylate FNIP1, disrupting interaction with HSP90AA1/Hsp90. This Mus musculus (Mouse) protein is Serine/threonine-protein phosphatase 5 (Ppp5c).